A 411-amino-acid chain; its full sequence is Anaerobic sulfatase-maturating enzyme homolog AslB (411 aa).

Residues 3-250 enclose the Radical SAM core domain; sequence QQVPTRAFHV…LVAIFDHWIK (248 aa). [4Fe-4S] cluster contacts are provided by Cys21 and Cys25. Tyr27 contributes to the S-adenosyl-L-methionine binding site. Cys28 is a [4Fe-4S] cluster binding site. Residues Gly74, Ser129, and Arg141 each contribute to the S-adenosyl-L-methionine site. Residues Cys276, Cys282, and Cys297 each coordinate [4Fe-4S] cluster. Catalysis depends on Asp298, which acts as the Proton acceptor. 5 residues coordinate [4Fe-4S] cluster: Cys339, Cys342, Cys348, Cys352, and Cys371.

The protein belongs to the radical SAM superfamily. Anaerobic sulfatase-maturating enzyme family. It depends on [4Fe-4S] cluster as a cofactor.

The polypeptide is Anaerobic sulfatase-maturating enzyme homolog AslB (aslB) (Escherichia coli (strain K12)).